Here is a 118-residue protein sequence, read N- to C-terminus: Large ribosomal subunit protein bL20 (118 aa).

Belongs to the bacterial ribosomal protein bL20 family.

In terms of biological role, binds directly to 23S ribosomal RNA and is necessary for the in vitro assembly process of the 50S ribosomal subunit. It is not involved in the protein synthesizing functions of that subunit. The protein is Large ribosomal subunit protein bL20 of Campylobacter curvus (strain 525.92).